The following is a 619-amino-acid chain: Mitogen-activated protein kinase kinase kinase 2 (619 aa).

Residues 25-45 are disordered; the sequence is LSLQETRKAKSSSPKKQNDVR. Ser26 is modified (phosphoserine). The PB1 domain maps to 43 to 122; sequence DVRVKFEHRG…KSLKILLVIN (80 aa). Phosphoserine is present on residues Ser153, Ser159, and Ser164. Disordered regions lie at residues 154–173, 201–248, and 289–355; these read IIGP…IPDE, LDPL…QEFS, and RTQG…APTN. Positions 203-219 are enriched in low complexity; the sequence is PLSLSSPENSGSGSCPS. Phosphoserine is present on residues Ser239, Ser297, Ser311, Ser331, Ser344, and Ser349. Over residues 290 to 299 the composition is skewed to polar residues; it reads TQGTSLRSPV. Residues 300-315 show a composition bias toward low complexity; sequence SFSPTDHSLSTSSGSS. Basic and acidic residues predominate over residues 322–332; the sequence is DDSRIRRRGSD. Residues 357-617 enclose the Protein kinase domain; that stretch reads RLGKLLGQGA…DELLRHMFVH (261 aa). Residues 362 to 371 and Lys385 each bind ATP; that span reads LGQGAFGRVY. The active-site Proton acceptor is the Asp483.

It belongs to the protein kinase superfamily. STE Ser/Thr protein kinase family. MAP kinase kinase kinase subfamily. In terms of assembly, interacts with PKN2; the interaction activates PKN2 kinase activity in a MAP3K2-independent kinase activity. Self-associates. Binds both upstream activators and downstream substrates in multimolecular complexes. Interacts (via the kinase catalytic domain) with STK38. Interacts with XIAP/BIRC4. The cofactor is Mg(2+). Autophosphorylated. Post-translationally, ubiquitination by XIAP/BIRC4 does not lead to proteasomal degradation.

It is found in the cytoplasm. It localises to the nucleus. The catalysed reaction is L-seryl-[protein] + ATP = O-phospho-L-seryl-[protein] + ADP + H(+). The enzyme catalyses L-threonyl-[protein] + ATP = O-phospho-L-threonyl-[protein] + ADP + H(+). With respect to regulation, activated by phosphorylation on Thr-524. Functionally, component of a protein kinase signal transduction cascade. Regulates the JNK and ERK5 pathways by phosphorylating and activating MAP2K5 and MAP2K7. Plays a role in caveolae kiss-and-run dynamics. The chain is Mitogen-activated protein kinase kinase kinase 2 (MAP3K2) from Homo sapiens (Human).